A 356-amino-acid polypeptide reads, in one-letter code: Probable scoulerine-9-O-methyltransferase OMT2B (356 aa).

Met-173 provides a ligand contact to S-adenosyl-L-methionine. Substrate is bound at residue Asp-176. Residues Thr-177, Gly-202, Asp-225, 245 to 246 (DI), and Lys-259 contribute to the S-adenosyl-L-methionine site. 260–264 (YVLHN) provides a ligand contact to substrate. His-263 acts as the Proton acceptor in catalysis.

This sequence belongs to the class I-like SAM-binding methyltransferase superfamily. Cation-independent O-methyltransferase family. COMT subfamily.

The enzyme catalyses (S)-scoulerine + S-adenosyl-L-methionine = (S)-tetrahydrocolumbamine + S-adenosyl-L-homocysteine + H(+). The protein operates within alkaloid biosynthesis. Functionally, methyltransferase involved in the biosynthesis of the benzylisoquinoline alkaloid noscapine. Catalyzes the conversion of (S)-scoulerine to (S)-tetrahydrocolumbamine. The heterodimers OMT2B-SOMT3 and OMT2B-6OMT do not possess 3-O-acetyl-4'-O-demethylpapaveroxine 4'-O-methyltransferase activity. This chain is Probable scoulerine-9-O-methyltransferase OMT2B, found in Papaver somniferum (Opium poppy).